The primary structure comprises 207 residues: Claudin-11 (207 aa).

Residue Met1 is a topological domain, cytoplasmic. A helical transmembrane segment spans residues 2 to 22 (VATCLQVVGFVTSFVGWIGVI). Topologically, residues 23 to 82 (VTTSTNDWVVTCGYTIPTCRKLDELGSKGLWADCVMATGLYHCKPLVDILILPGYVQACR) are extracellular. Residues 83 to 103 (ALMIAASVLGLPAILLLLTVL) form a helical membrane-spanning segment. Residues 104-122 (PCIRMGQEPGVAKYRRAQL) lie on the Cytoplasmic side of the membrane. A helical transmembrane segment spans residues 123 to 143 (AGVLLILLALCALVATIWFPV). The Extracellular portion of the chain corresponds to 144–157 (CAHRETTIVSFGYS). The chain crosses the membrane as a helical span at residues 158-178 (LYAGWIGAVLCLVGGCVILCC). At 179 to 207 (AGDAQAFGENRFYYTAGSSSPTHAKSAHV) the chain is on the cytoplasmic side. A phosphoserine mark is found at Ser197 and Ser198.

This sequence belongs to the claudin family. In terms of assembly, interacts with tetraspanin-3/TSPAN3. Interacts with OCLN.

It localises to the cell junction. The protein resides in the tight junction. It is found in the cell membrane. Functionally, plays a major role in tight junction-specific obliteration of the intercellular space, through calcium-independent cell-adhesion activity. The chain is Claudin-11 (CLDN11) from Homo sapiens (Human).